Reading from the N-terminus, the 486-residue chain is Glutamate--tRNA ligase (486 aa).

The short motif at 11–21 (PSPTGFLHIGG) is the 'HIGH' region element. C108, C110, C136, and H138 together coordinate Zn(2+). The short motif at 253-257 (KLSKR) is the 'KMSKS' region element. K256 serves as a coordination point for ATP.

Belongs to the class-I aminoacyl-tRNA synthetase family. Glutamate--tRNA ligase type 1 subfamily. As to quaternary structure, monomer. Requires Zn(2+) as cofactor.

It is found in the cytoplasm. The catalysed reaction is tRNA(Glu) + L-glutamate + ATP = L-glutamyl-tRNA(Glu) + AMP + diphosphate. Its function is as follows. Catalyzes the attachment of glutamate to tRNA(Glu) in a two-step reaction: glutamate is first activated by ATP to form Glu-AMP and then transferred to the acceptor end of tRNA(Glu). This chain is Glutamate--tRNA ligase, found in Lysinibacillus sphaericus (strain C3-41).